The following is a 207-amino-acid chain: LexA repressor (207 aa).

Positions 28–48 (VREIGEAVGLASSSTVHGHLA) form a DNA-binding region, H-T-H motif. Catalysis depends on for autocatalytic cleavage activity residues Ser129 and Lys167.

Belongs to the peptidase S24 family. Homodimer.

It catalyses the reaction Hydrolysis of Ala-|-Gly bond in repressor LexA.. In terms of biological role, represses a number of genes involved in the response to DNA damage (SOS response), including recA and lexA. In the presence of single-stranded DNA, RecA interacts with LexA causing an autocatalytic cleavage which disrupts the DNA-binding part of LexA, leading to derepression of the SOS regulon and eventually DNA repair. The polypeptide is LexA repressor (Brevibacillus brevis (strain 47 / JCM 6285 / NBRC 100599)).